We begin with the raw amino-acid sequence, 108 residues long: Phosphocarrier protein HPr (108 aa).

The 88-residue stretch at 21–108 (ELQATCIVKN…DAFSSGFGEL (88 aa)) folds into the HPr domain. His-35 acts as the Pros-phosphohistidine intermediate in catalysis.

The protein belongs to the HPr family.

It is found in the cytoplasm. In terms of biological role, general (non sugar-specific) component of the phosphoenolpyruvate-dependent sugar phosphotransferase system (sugar PTS). This major carbohydrate active-transport system catalyzes the phosphorylation of incoming sugar substrates concomitantly with their translocation across the cell membrane. The phosphoryl group from phosphoenolpyruvate (PEP) is transferred to the phosphoryl carrier protein HPr by enzyme I. Phospho-HPr then transfers it to the PTS EIIA domain. This Chlamydia pneumoniae (Chlamydophila pneumoniae) protein is Phosphocarrier protein HPr (ptsH).